A 279-amino-acid chain; its full sequence is Undecaprenyl-diphosphatase (279 aa).

Helical transmembrane passes span 2–22 (LIIE…TEWL), 44–64 (AFIE…VMLI), 85–105 (WQLW…AVPL), 113–133 (FYFM…FIWI), 163–183 (VLSI…AIIL), 188–208 (TVAA…YSGL), 223–243 (AQVL…LLAI), and 255–275 (FTIF…YSFF).

Belongs to the UppP family.

The protein resides in the cell membrane. It carries out the reaction di-trans,octa-cis-undecaprenyl diphosphate + H2O = di-trans,octa-cis-undecaprenyl phosphate + phosphate + H(+). In terms of biological role, catalyzes the dephosphorylation of undecaprenyl diphosphate (UPP). Confers resistance to bacitracin. This Streptococcus pyogenes serotype M2 (strain MGAS10270) protein is Undecaprenyl-diphosphatase.